Consider the following 481-residue polypeptide: Glutamyl-tRNA(Gln) amidotransferase subunit A (481 aa).

Residues lysine 76 and serine 151 each act as charge relay system in the active site. Catalysis depends on serine 175, which acts as the Acyl-ester intermediate.

This sequence belongs to the amidase family. GatA subfamily. As to quaternary structure, heterotrimer of A, B and C subunits.

The enzyme catalyses L-glutamyl-tRNA(Gln) + L-glutamine + ATP + H2O = L-glutaminyl-tRNA(Gln) + L-glutamate + ADP + phosphate + H(+). Its function is as follows. Allows the formation of correctly charged Gln-tRNA(Gln) through the transamidation of misacylated Glu-tRNA(Gln) in organisms which lack glutaminyl-tRNA synthetase. The reaction takes place in the presence of glutamine and ATP through an activated gamma-phospho-Glu-tRNA(Gln). The chain is Glutamyl-tRNA(Gln) amidotransferase subunit A from Neisseria meningitidis serogroup C / serotype 2a (strain ATCC 700532 / DSM 15464 / FAM18).